The primary structure comprises 206 residues: LexA repressor (206 aa).

Positions 28-48 (VREIGQAVGLASSSTVHGHLS) form a DNA-binding region, H-T-H motif. Active-site for autocatalytic cleavage activity residues include serine 128 and lysine 166.

It belongs to the peptidase S24 family. As to quaternary structure, homodimer.

It catalyses the reaction Hydrolysis of Ala-|-Gly bond in repressor LexA.. In terms of biological role, represses a number of genes involved in the response to DNA damage (SOS response), including recA and lexA. In the presence of single-stranded DNA, RecA interacts with LexA causing an autocatalytic cleavage which disrupts the DNA-binding part of LexA, leading to derepression of the SOS regulon and eventually DNA repair. The sequence is that of LexA repressor from Bacillus thuringiensis (strain Al Hakam).